A 73-amino-acid polypeptide reads, in one-letter code: Small ribosomal subunit protein bS18c (73 aa).

Belongs to the bacterial ribosomal protein bS18 family. Part of the 30S ribosomal subunit.

The protein localises to the plastid. The protein resides in the chloroplast. This is Small ribosomal subunit protein bS18c from Nephroselmis olivacea (Green alga).